The sequence spans 86 residues: Putative regulatory protein BBR47_37350 (86 aa).

This sequence belongs to the RemA family.

In Brevibacillus brevis (strain 47 / JCM 6285 / NBRC 100599), this protein is Putative regulatory protein BBR47_37350.